The following is a 99-amino-acid chain: RING finger protein Z (99 aa).

The N-myristoyl glycine; by host moiety is linked to residue Gly2. Residues 31-67 (CKSCWFENKGLVECNNHYLCLNCLTLLLSVSNRCPIC) form an RING-type; atypical zinc finger. Residues 74 to 99 (KLRPSAAPTAPPTGAADSIRPPPYSP) are disordered. Residues 77-89 (PSAAPTAPPTGAA) show a composition bias toward low complexity. A PTAP/PSAP motif motif is present at residues 81-84 (PTAP). The PPXY motif signature appears at 94–97 (PPPY).

The protein belongs to the arenaviridae Z protein family. In terms of assembly, interacts with protein NP; this interaction probably directs the encapsidated genome to budding sites. Interacts (via RING domain) with polymerase L; this interaction inhibits viral transcription and replication, Z partially blocks the product exit tunnel for the releasing nascent RNA product. Interacts with the glycoprotein complex; this interaction plays a role in virion budding. Interacts with host eIF4E; this interaction results in eIF4E reduced affinity for its substrate, the 5'-m7 G cap structure. Interacts (via late-budding domain) with host TSG101; this interaction is essential for budding and release of viral particles. Interacts with host RPLP0; this interaction may serve to load ribosome-like particles inside the virion. Interacts with host PML; this interaction induces PML bodies redistribution in the cytoplasm upon viral infection. Interacts with host TAX1BP1. Post-translationally, myristoylation is required for the role of RING finger protein Z in assembly and budding.

It is found in the virion. It localises to the host cytoplasm. The protein resides in the host perinuclear region. The protein localises to the host cell membrane. Plays a crucial role in virion assembly and budding. Expressed late in the virus life cycle, it acts as an inhibitor of viral transcription and RNA synthesis by interacting with the viral polymerase L. Presumably recruits the NP encapsidated genome to cellular membranes at budding sites via direct interaction with NP. Plays critical roles in the final steps of viral release by interacting with host TSG101, a member of the vacuolar protein-sorting pathway and using other cellular host proteins involved in vesicle formation pathway. The budding of the virus progeny occurs after association of protein Z with the viral glycoprotein complex SSP-GP1-GP2 at the cell periphery, step that requires myristoylation of protein Z. Also selectively represses protein production by associating with host eIF4E. In cell-based minigenome assay, has an inhibitory effect on the ribonucleoprotein machinery (vRNP), which is responsible for the replication and transcription of the viral genome. This chain is RING finger protein Z, found in Homo sapiens (Human).